Reading from the N-terminus, the 207-residue chain is Glycerol-3-phosphate acyltransferase (207 aa).

6 consecutive transmembrane segments (helical) span residues 7–27 (YALA…LVIV), 58–78 (LATF…FTLL), 83–103 (VGFV…WLGF), 116–136 (LAFV…LGLF), 141–161 (ISSL…WLMG), and 166–186 (LILA…RENI).

It belongs to the PlsY family. As to quaternary structure, probably interacts with PlsX.

It is found in the cell inner membrane. The catalysed reaction is an acyl phosphate + sn-glycerol 3-phosphate = a 1-acyl-sn-glycero-3-phosphate + phosphate. It participates in lipid metabolism; phospholipid metabolism. In terms of biological role, catalyzes the transfer of an acyl group from acyl-phosphate (acyl-PO(4)) to glycerol-3-phosphate (G3P) to form lysophosphatidic acid (LPA). This enzyme utilizes acyl-phosphate as fatty acyl donor, but not acyl-CoA or acyl-ACP. The polypeptide is Glycerol-3-phosphate acyltransferase (Hyphomonas neptunium (strain ATCC 15444)).